Reading from the N-terminus, the 1117-residue chain is Protein cup (1117 aa).

Residues 1–106 (MQMAEAEQEN…PPPPPPLPTS (106 aa)) form a disordered region. Composition is skewed to pro residues over residues 54 to 64 (YPPPPPPPTPV) and 95 to 104 (CAPPPPPPLP). Residues Ser263 and Ser270 each carry the phosphoserine modification. The segment at 270–326 (SPRKQVASKEAVPEQQSSQVQQKRPPSTGIHKPGSLRAPKAVRPTTAPVVSSKPVKS) is disordered. Over residues 283–294 (EQQSSQVQQKRP) the composition is skewed to polar residues. Residues 327–333 (YTRSRLM) carry the YXXXXLphi motif 1 motif. Phosphoserine is present on residues Ser347 and Ser350. The YXXXXLphi motif 2 motif lies at 363 to 369 (ELEGRLR). 6 disordered regions span residues 493–528 (ISSQPQRRPNTPVMGMSINRSENDTLHSNESSEDLS), 596–618 (KEGNKNHGLGETERETSKQKMDH), 654–673 (TEHQQQKEEKRPGSGRSFQF), 679–728 (SQQN…SSSS), 984–1004 (GAKHQAQQQYLNRGQQRQARP), and 1016–1051 (ISGGGNNHASGYPMNGQPQKHHSNLRFGDNQNFQSF). Phosphothreonine is present on Thr503. Phosphoserine is present on residues Ser509, Ser513, Ser520, Ser523, and Ser524. Low complexity-rich tracts occupy residues 679–712 (SQQNYESSSYVNHQQPPQTQPQQMQQQSNTNTNN) and 988–1001 (QAQQQYLNRGQQRQ).

The protein belongs to the 4E-T/EIF4E-T family. As to quaternary structure, component of the osk RNP complex, which is composed of at least exu, yps, aret/bruno, cup, and the mRNA of osk. Interacts with the decapping activators me31B and tral. Component of the nanos RNP complex, which is composed of at least smg, cup, tral, me31B, the CCR4-NOT complex members Rga/NOT2 and Caf1, and the mRNA of nanos (nos). Interacts with btz. Recruited to the 3'-UTR of nos and osk mRNAs by smg and btz, respectively. Forms a ribonucleoprotein complex (RNP) containing at least me31B, eIF4E1, cup, tral and pAbp; this interaction is required for the translational silencing of maternal mRNAs during the maternal-to-zygotic transition. No interaction was detected with pAbp in 1-5 hour embryos. Interacts with osk and vas. Interacts with Pop2, twin/CCR4, Rga, Not3 and Not1 which are all core components of the CCR4-NOT deadenylase complex; interaction with the complex is required for cup deadenylation activity. Interacts with nanos. Interacts with smg. Interacts (via YXXXXLphi motifs) with eIF4E1; the interaction promotes retention of cup in the cytoplasm. Interacts with orb; the interaction represses the orb positive autoregulatory loop. Interacts with Nup154. As to expression, predominantly expressed in ovaries and in 0-2 hours old embryos. Weakly expressed in testis. Expressed in young embryos through stage 9, then it decreases throughout the rest of embryogenesis. In ovaries, it is expressed in germ cells throughout pre-vitellogenic development, but is not expressed in the somatic follicle cells. In germarial cysts, the protein (and not the transcripts) is transported selectively into the oocyte.

Its subcellular location is the cytoplasm. It is found in the nucleus. The protein localises to the cytoplasmic ribonucleoprotein granule. In terms of biological role, adapter protein that plays a central role in localization of transcripts in the oocyte and in young embryos. Maintains RNA targets in a repressed state by promoting their deadenylation and protects deadenylated mRNAs from further degradation. Binds to and recruits eIF-4E to the 3'-UTR of some mRNA targets which prevents interaction between eIF4E1 and eIF4G. This may contribute to translational repression but does not appear to be necessary for it to occur. Can promote translational repression independently of deadenylation and eIF4E1 binding. Required for correct localization of eIF4E1 in the developing oocyte. Required for translational repression of oskar (osk) mRNA. Also required for the translational repression of nanos (nos) mRNA. Promotes the accumulation of the germ plasm components osk, vas and stau at the posterior pole of the oocyte and is required for germ cell development. Represses orb positive autoregulatory activity which prevents premature activation of orb and ensures its accumulation specifically in the developing oocyte. In 0-1 hour embryos, forms a complex with me31B, cup, tral and pAbp which binds to various mRNAs including maternal mRNAs, and down-regulates their expression during the maternal-to-zygotic transition. In Drosophila melanogaster (Fruit fly), this protein is Protein cup (cup).